The following is a 313-amino-acid chain: Intelectin-1 (313 aa).

Positions 1–18 (MNQLSFLLFLIATTRGWS) are cleaved as a signal peptide. The region spanning 32–255 (SSSPSLPRSC…AANALCAGMR (224 aa)) is the Fibrinogen C-terminal domain. A disulfide bridge connects residues cysteine 41 and cysteine 70. 7 residues coordinate Ca(2+): histidine 86, glutamate 87, aspartate 89, glycine 92, glycine 97, aspartate 98, and aspartate 133. 3 cysteine pairs are disulfide-bonded: cysteine 94–cysteine 280, cysteine 199–cysteine 259, and cysteine 251–cysteine 265. The N-linked (GlcNAc...) asparagine glycan is linked to asparagine 163. Ca(2+)-binding residues include asparagine 260, glutamate 262, glutamate 274, and aspartate 282. A carbohydrate contacts are provided by residues 262–263 (EH) and glutamate 274. Serine 298 carries the GPI-anchor amidated serine lipid modification. The propeptide occupies 299–313 (SSREITEAAVLLFYR).

Homotrimer; disulfide-linked. May interact with LTF. Post-translationally, N-glycosylated. Highly expressed in omental adipose tissue where it is found in stromal vascular cells but not in fat cells but is barely detectable in subcutaneous adipose tissue (at protein level). Highly expressed in the small intestine. Also found in the heart, testis, colon, salivary gland, skeletal muscle, pancreas and thyroid and, to a lesser degree, in the uterus, spleen, prostate, lymph node and thymus.

The protein localises to the cell membrane. Its subcellular location is the secreted. Its function is as follows. Lectin that specifically recognizes microbial carbohydrate chains in a calcium-dependent manner. Binds to microbial glycans that contain a terminal acyclic 1,2-diol moiety, including beta-linked D-galactofuranose (beta-Galf), D-phosphoglycerol-modified glycans, D-glycero-D-talo-oct-2-ulosonic acid (KO) and 3-deoxy-D-manno-oct-2-ulosonic acid (KDO). Binds to glycans from Gram-positive and Gram-negative bacteria, including K.pneumoniae, S.pneumoniae, Y.pestis, P.mirabilis and P.vulgaris. Does not bind human glycans. Probably plays a role in the defense system against microorganisms. May function as adipokine that has no effect on basal glucose uptake but enhances insulin-stimulated glucose uptake in adipocytes. Increases AKT phosphorylation in the absence and presence of insulin. May interact with lactoferrin/LTF and increase its uptake, and may thereby play a role in iron absorption. The polypeptide is Intelectin-1 (ITLN1) (Homo sapiens (Human)).